Reading from the N-terminus, the 367-residue chain is Pepsin A (367 aa).

A propeptide spans 1–42 (SIHRVPLKKGKSLRKQLKDHGLLEDFLKKHPYNPASKYHPVL) (activation peptide). Residues 59–364 (YYGTISIGTP…DRANNKVGLS (306 aa)) form the Peptidase A1 domain. The active site involves Asp77. A disulfide bridge connects residues Cys90 and Cys95. An N-linked (GlcNAc...) asparagine glycan is attached at Asn113. Cys251 and Cys255 are oxidised to a cystine. Asp260 is an active-site residue. Cysteines 290 and 323 form a disulfide.

The protein belongs to the peptidase A1 family.

It catalyses the reaction Preferential cleavage: hydrophobic, preferably aromatic, residues in P1 and P1' positions. Cleaves 1-Phe-|-Val-2, 4-Gln-|-His-5, 13-Glu-|-Ala-14, 14-Ala-|-Leu-15, 15-Leu-|-Tyr-16, 16-Tyr-|-Leu-17, 23-Gly-|-Phe-24, 24-Phe-|-Phe-25 and 25-Phe-|-Tyr-26 bonds in the B chain of insulin.. Functionally, shows particularly broad specificity; although bonds involving phenylalanine and leucine are preferred, many others are also cleaved to some extent. This Gallus gallus (Chicken) protein is Pepsin A (PGA).